A 677-amino-acid polypeptide reads, in one-letter code: Polyunsaturated fatty acid lipoxygenase ALOX8 (677 aa).

The PLAT domain maps to 2–125 (AKCRVRVSTG…ELVLREGAAK (124 aa)). Residues Gly-15, Gly-17, Asp-39, His-40, Gly-42, Glu-44, Asp-86, and Ala-87 each contribute to the Ca(2+) site. The 552-residue stretch at 126–677 (VSWQDHHPTL…PPLIENSVSI (552 aa)) folds into the Lipoxygenase domain. Fe cation contacts are provided by His-374, His-379, His-554, and Ile-677.

The protein belongs to the lipoxygenase family. Fe cation is required as a cofactor. Expressed in epidermis and brain. No expression found in heart, spleen, liver, skeletal muscle, kidney or testis.

It is found in the cytoplasm. The protein localises to the cytosol. The protein resides in the membrane. It carries out the reaction (9Z,12Z)-octadecadienoate + O2 = (9S)-hydroperoxy-(10E,12Z)-octadecadienoate. It catalyses the reaction (5Z,8Z,11Z,14Z)-eicosatetraenoate + O2 = (8S)-hydroperoxy-(5Z,9E,11Z,14Z)-eicosatetraenoate. The enzyme catalyses (15S)-hydroperoxy-(5Z,8Z,11Z,13E)-eicosatetraenoate + O2 = (8S,15S)-dihydroperoxy-(5Z,9E,11Z,13E)-eicosatetraenoate. The catalysed reaction is (8S)-hydroperoxy-(5Z,9E,11Z,14Z)-eicosatetraenoate + O2 = (8S,15S)-dihydroperoxy-(5Z,9E,11Z,13E)-eicosatetraenoate. It carries out the reaction 1-octadecanoyl-2-(5Z,8Z,11Z,14Z-eicosatetraenoyl)-sn-glycero-3-phosphocholine + O2 = 1-octadecanoyl-2-(15-hydroperoxy-5Z,8Z,11Z,13E-eicosatetraenoyl)-sn-glycero-3-phosphocholine. It catalyses the reaction a 1-acyl-2-(5Z,8Z,11Z,14Z-eicosatetraenoyl)-sn-glycero-3-phospho-(1D-myo-inositol) + O2 = a 1-acyl-2-(15-hydroperoxy-5Z,8Z,11Z,13E-eicosatetraenoyl)-sn-glycero-3-phospho-(1D-myo-inositol). The enzyme catalyses a 1-acyl-2-(8Z,11Z,14Z-eicosatrienoyl)-sn-glycero-3-phospho-(1D-myo-inositol) + O2 = a 1-acyl-2-(15-hydroperoxy-8Z,11Z,13E-eicosatrienoyl)-sn-glycero-3-phospho-(1D-myo-inositol). The catalysed reaction is (5Z,8Z,11Z,14Z)-eicosatetraenoate + O2 = 9-hydroperoxy-(5Z,7E,11Z,14Z)-eicosatetraenoate. It carries out the reaction (5Z,8Z,11Z,14Z)-eicosatetraenoate + O2 = 11-hydroperoxy-(5Z,8Z,12E,14Z)-eicosatetraenoate. It catalyses the reaction (8Z,11Z,14Z)-eicosatrienoate + O2 = 15-hydroperoxy-(8Z,11Z,13E)-eicosatrienoate. The protein operates within lipid metabolism; hydroperoxy eicosatetraenoic acid biosynthesis. In terms of biological role, non-heme iron-containing dioxygenase that catalyzes the stereo-specific peroxidation of free and esterified polyunsaturated fatty acids generating a spectrum of bioactive lipid mediators. Catalyzes the peroxidation of arachidonate and linoleate into (8S)-HPETE and (9S)-HPODE respectively. In addition to generate (8S)-HPETE from free arachidonic acid (AA), may produce other HETE isomers from phospholipid-esterified polyunsaturated fatty acids and minor products derived from (8S)-HPETE itself that may include leukotriene A4 and 8,15-diHPETE. With free arachidonate as substrate, has no detectable 15S-lipoxygenase activity and only displays a 8S-lipoxygenase activity. However may have a 15S-lipoxygenase activity with (8S)-HPETE to produce (8S,15S)-diHPETE and when oxidizes directly arachidonic acid esterified to membrane-bound phospholipids to produce a phospholipid-esterified 15-HpETE. May also catalyze (15S)-HPETE peroxidation to produce 8,15-diHPETE. May play a role in keratinocyte differentiation through activation of the peroxisome proliferator activated receptor signaling pathway. The sequence is that of Polyunsaturated fatty acid lipoxygenase ALOX8 from Mus musculus (Mouse).